A 547-amino-acid polypeptide reads, in one-letter code: Phosphoethanolamine transferase EptA (547 aa).

The Cytoplasmic segment spans residues 1–9; sequence MLKRLLKRP. The helical transmembrane segment at 10 to 30 threads the bilayer; that stretch reads SLNLLAWLLLAAFYISICLNI. Topologically, residues 31–47 are periplasmic; the sequence is AFFKQVLQALPLDSLHN. A helical membrane pass occupies residues 48-68; it reads VLVFLSMPVVAFSVINIVLTL. The Cytoplasmic portion of the chain corresponds to 69 to 79; the sequence is SSFLWLNRPLA. Residues 80–100 form a helical membrane-spanning segment; that stretch reads CLFILVGAAAQYFIMTYGIVI. Residues 101-123 lie on the Periplasmic side of the membrane; it reads DRSMIANIIDTTPAESYALMTPQ. Residues 124–144 form a helical membrane-spanning segment; sequence MLLTLGFSGVLAALIACWIKI. At 145–154 the chain is on the cytoplasmic side; it reads KPATSRLRSV. The helical transmembrane segment at 155–175 threads the bilayer; the sequence is LFRGANILVSVLLILLVAALF. Residues 176-547 are Periplasmic-facing; the sequence is YKDYASLFRN…ILQTCRRVSE (372 aa).

Belongs to the phosphoethanolamine transferase family. EptA subfamily. In terms of assembly, has been isolated as a 91 kDa complex containing ZipA-EptA and an unidentified 24 kDa protein.

It localises to the cell inner membrane. Functionally, catalyzes the addition of a phosphoethanolamine moiety to the lipid A. The phosphoethanolamine modification is required for resistance to polymyxin. The chain is Phosphoethanolamine transferase EptA (eptA) from Escherichia coli (strain K12).